Consider the following 208-residue polypeptide: Guanylate kinase (208 aa).

The 180-residue stretch at 8 to 187 (GVCLVISAPS…AISQARSVLT (180 aa)) folds into the Guanylate kinase-like domain. 15 to 22 (APSGAGKS) lines the ATP pocket.

Belongs to the guanylate kinase family.

Its subcellular location is the cytoplasm. It catalyses the reaction GMP + ATP = GDP + ADP. In terms of biological role, essential for recycling GMP and indirectly, cGMP. The chain is Guanylate kinase from Gluconobacter oxydans (strain 621H) (Gluconobacter suboxydans).